Here is a 349-residue protein sequence, read N- to C-terminus: Phosphoribosylformylglycinamidine cyclo-ligase (349 aa).

Belongs to the AIR synthase family.

The protein resides in the cytoplasm. It carries out the reaction 2-formamido-N(1)-(5-O-phospho-beta-D-ribosyl)acetamidine + ATP = 5-amino-1-(5-phospho-beta-D-ribosyl)imidazole + ADP + phosphate + H(+). It functions in the pathway purine metabolism; IMP biosynthesis via de novo pathway; 5-amino-1-(5-phospho-D-ribosyl)imidazole from N(2)-formyl-N(1)-(5-phospho-D-ribosyl)glycinamide: step 2/2. In Listeria monocytogenes serovar 1/2a (strain ATCC BAA-679 / EGD-e), this protein is Phosphoribosylformylglycinamidine cyclo-ligase.